Reading from the N-terminus, the 440-residue chain is COP9 signalosome complex subunit 5 (440 aa).

Residues 71-218 (VLISKLSCEK…MGAFRTIESK (148 aa)) enclose the MPN domain. Zn(2+)-binding residues include His164, His166, and Asp177. The JAMM motif signature appears at 164–177 (HSHPGYDCWLSNID). Residues 319–341 (TQRGDSTETSSFGSMFSGDNTSD) show a composition bias toward polar residues. Disordered stretches follow at residues 319–343 (TQRG…SDVD) and 375–399 (SSRS…CHDE).

This sequence belongs to the peptidase M67A family. CSN5 subfamily. Component of a COP9 signalosome-like (CSN) complex, composed of at least RRI1/CSN5, CSN9, RRI2/CSN10, PCI8/CSN11, CSN12 and CSI1. Within this complex it probably interacts directly with CSN12. Also interacts with RPN5. A divalent metal cation is required as a cofactor.

Its subcellular location is the cytoplasm. The protein localises to the nucleus. Functionally, catalytic component of the COP9 signalosome (CSN) complex that acts as an regulator of the ubiquitin (Ubl) conjugation pathway by mediating the deneddylation of the cullin subunit of SCF-type E3 ubiquitin-protein ligase complexes. The CSN complex is involved in the regulation of the mating pheromone response. The protein is COP9 signalosome complex subunit 5 (RRI1) of Saccharomyces cerevisiae (strain ATCC 204508 / S288c) (Baker's yeast).